The primary structure comprises 99 residues: Putative endopeptidase RzpR (99 aa).

This is Putative endopeptidase RzpR (rzpR) from Escherichia coli (strain K12).